The sequence spans 29 residues: Varv peptide A (29 aa).

The segment at residues 1–29 (GLPVCGETCVGGTCNTPGCSCSWPVCTRN) is a cross-link (cyclopeptide (Gly-Asn)). Intrachain disulfides connect Cys-5-Cys-19, Cys-9-Cys-21, and Cys-14-Cys-26.

In terms of processing, this is a cyclic peptide.

Functionally, probably participates in a plant defense mechanism. Has cytotoxic activity against a variety of drug-resistant and drug-sensitive human tumor cell lines, and against primary chronic lymphocytic leukemia cells. Has weak cytotoxic activity against primary ovarian carcinoma cells or normal lymphocytes. This chain is Varv peptide A, found in Viola arvensis (European field pansy).